The primary structure comprises 141 residues: VLSAADKANVKAAWGKVGGQAGAHGAEALERMFLGFPTTKTYFPHFNLSHGSDQVKAHGQKVADALTKAVGHLDDLPGALSALSDLHAHKLRVDPVNFKLLSHCLLVTLAAHHPDDFNPSVHASLDKFLANVSTVLTSKYR.

A Globin domain is found at 1-141 (VLSAADKANV…VSTVLTSKYR (141 aa)). Phosphoserine is present on serine 3. An N6-succinyllysine mark is found at lysine 7 and lysine 11. Lysine 16 bears the N6-acetyllysine; alternate mark. N6-succinyllysine; alternate is present on lysine 16. Lysine 40 is modified (N6-succinyllysine). Serine 49 carries the phosphoserine modification. Position 58 (histidine 58) interacts with O2. Residue histidine 87 participates in heme b binding. Serine 102 bears the Phosphoserine mark. At threonine 108 the chain carries Phosphothreonine. Serine 124 is subject to Phosphoserine. Phosphothreonine is present on residues threonine 134 and threonine 137. Serine 138 carries the post-translational modification Phosphoserine.

The protein belongs to the globin family. Heterotetramer of two alpha chains and two beta chains. As to expression, red blood cells.

Involved in oxygen transport from the lung to the various peripheral tissues. In terms of biological role, hemopressin acts as an antagonist peptide of the cannabinoid receptor CNR1. Hemopressin-binding efficiently blocks cannabinoid receptor CNR1 and subsequent signaling. The polypeptide is Hemoglobin subunit alpha (HBA) (Sus scrofa (Pig)).